Consider the following 309-residue polypeptide: MSNQKKNDVSSFVKDSLIGGTAGGVSKTIVAPIERVKLLLQVQSASTQIAADKQYKGIVDCFVRVSKEQGVISLWRGNLANVIRYFPTQALNFAFKDKYKKFFVRHTAKENPTKFFIGNLLSGGAAGATSLLFVYPLDFARTRLAADVGTGSARQFTGLGNCISSIYKRDGLIGLYRGFGVSVGGIFVYRAAFFGGYDTAKGILLGENNKKASFWASWGIAQVVTTIAGVVSYPFDTVRRRMMMQAGRADILYSSTWDCWVKIATREGPTAFFKGALSNAIRGSGGALVLVIYDEIQKLMGFEGGVGSE.

Solcar repeat units lie at residues 10 to 102 (SSFV…YKKF), 114 to 203 (KFFI…AKGI), and 216 to 299 (ASWG…IQKL). 5 consecutive transmembrane segments (helical) span residues 12 to 41 (FVKD…LLLQ), 79 to 103 (LANV…KKFF), 113 to 133 (TKFF…SLLF), 181 to 201 (VSVG…DTAK), and 215 to 235 (WASW…SYPF). ADP contacts are provided by R84 and K96. R239 is an ADP binding site. The tract at residues 239–244 (RRRMMM) is important for transport activity. Positions 239–244 (RRRMMM) match the Nucleotide carrier signature motif motif. Residues 276–293 (ALSNAIRGSGGALVLVIY) form a helical membrane-spanning segment.

The protein belongs to the mitochondrial carrier (TC 2.A.29) family. Monomer.

The protein localises to the mitochondrion inner membrane. It catalyses the reaction ADP(in) + ATP(out) = ADP(out) + ATP(in). Its activity is regulated as follows. The matrix-open state (m-state) is inhibited by the membrane-permeable bongkrekic acid (BKA). The cytoplasmic-open state (c-state) is inhibited by the membrane-impermeable toxic inhibitor carboxyatractyloside (CATR). Functionally, ADP:ATP antiporter that mediates import of ADP into the mitochondrial matrix for ATP synthesis, and export of ATP out to fuel the cell. Cycles between the cytoplasmic-open state (c-state) and the matrix-open state (m-state): operates by the alternating access mechanism with a single substrate-binding site intermittently exposed to either the cytosolic (c-state) or matrix (m-state) side of the inner mitochondrial membrane. The sequence is that of Mitochondrial substrate carrier family protein ancA (ancA) from Dictyostelium discoideum (Social amoeba).